The sequence spans 1374 residues: DNA-directed RNA polymerase subunit beta (1374 aa).

Belongs to the RNA polymerase beta chain family. In terms of assembly, the RNAP catalytic core consists of 2 alpha, 1 beta, 1 beta' and 1 omega subunit. When a sigma factor is associated with the core the holoenzyme is formed, which can initiate transcription.

It carries out the reaction RNA(n) + a ribonucleoside 5'-triphosphate = RNA(n+1) + diphosphate. Functionally, DNA-dependent RNA polymerase catalyzes the transcription of DNA into RNA using the four ribonucleoside triphosphates as substrates. The protein is DNA-directed RNA polymerase subunit beta of Methylobacterium radiotolerans (strain ATCC 27329 / DSM 1819 / JCM 2831 / NBRC 15690 / NCIMB 10815 / 0-1).